The following is a 282-amino-acid chain: Putative quercetin 2,3-dioxygenase VC_A0969 (282 aa).

The tract at residues 1 to 21 is disordered; that stretch reads MTKDREIRQTVPAQPTSDGDG. The a divalent metal cation site is built by H59, H61, H103, and E105.

Belongs to the pirin family. It depends on a divalent metal cation as a cofactor.

It carries out the reaction quercetin + O2 = 2-(3,4-dihydroxybenzoyloxy)-4,6-dihydroxybenzoate + CO. It participates in flavonoid metabolism; quercetin degradation. Its function is as follows. Putative quercetin 2,3-dioxygenase. In Vibrio cholerae serotype O1 (strain ATCC 39315 / El Tor Inaba N16961), this protein is Putative quercetin 2,3-dioxygenase VC_A0969.